Consider the following 619-residue polypeptide: Very-long-chain aldehyde decarbonylase GL1-4 (619 aa).

5 helical membrane passes run isoleucine 45–isoleucine 65, glycine 94–proline 114, glycine 126–histidine 146, phenylalanine 178–leucine 198, and alanine 325–tyrosine 345. The Fatty acid hydroxylase domain occupies valine 138–threonine 272.

This sequence belongs to the sterol desaturase family. As to quaternary structure, homodimer. Expressed ubiquitously at low levels, with higher accumulation in developing panicles, shoots and flag leaves.

Its subcellular location is the endoplasmic reticulum membrane. It catalyses the reaction a long-chain fatty aldehyde + 2 NADPH + O2 + H(+) = a long-chain alkane + formate + 2 NADP(+) + H2O. Aldehyde decarbonylase involved in the conversion of aldehydes to alkanes. Core component of a very-long-chain alkane synthesis complex. The chain is Very-long-chain aldehyde decarbonylase GL1-4 from Oryza sativa subsp. japonica (Rice).